The sequence spans 89 residues: Porphobilinogen deaminase (89 aa).

This sequence belongs to the HMBS family. As to quaternary structure, monomer. Dipyrromethane is required as a cofactor.

It carries out the reaction 4 porphobilinogen + H2O = hydroxymethylbilane + 4 NH4(+). It functions in the pathway porphyrin-containing compound metabolism; protoporphyrin-IX biosynthesis; coproporphyrinogen-III from 5-aminolevulinate: step 2/4. Its function is as follows. Tetrapolymerization of the monopyrrole PBG into the hydroxymethylbilane pre-uroporphyrinogen in several discrete steps. The protein is Porphobilinogen deaminase (hemC) of Dickeya chrysanthemi (Pectobacterium chrysanthemi).